Reading from the N-terminus, the 376-residue chain is MSDSERTSLPLVFDEPRGRKKPPRHLADLAPDERTAYAKELGLPGFRAKQLSTHYFSRLVDDPDQMTDLPAGQRAELVAGLLPGLMTPLRTMEADRGTTRKTLWRLFDGALVESVLMRYPDRATMCVSSQAGCGMACPFCATGQGGLQRNMSTAEIVEQVVAGARSLARGEVPGGPGRVSNVVFMGMGEPLANYKAVLGAVRRLTDPAPDGLGMSARGVTVSTVGLVPRMRQLADEGIPVTLALSLHAPDDELRNELVPINTRFSVAETVEAAWNYAKVTKRRVSIEYAMMRGINDQAWRADLLGDVLRGYGDWGWVHVNLIPLNPTPGSKWTASDPADEREFVRRLEAKAIPTTVRDTRGREIDGACGQLAATEA.

Positions 1–25 are disordered; the sequence is MSDSERTSLPLVFDEPRGRKKPPRH. Glutamate 113 (proton acceptor) is an active-site residue. The Radical SAM core domain occupies 119–362; it reads YPDRATMCVS…PTTVRDTRGR (244 aa). Cysteine 126 and cysteine 368 are disulfide-bonded. 3 residues coordinate [4Fe-4S] cluster: cysteine 133, cysteine 137, and cysteine 140. Residues 188–189, serine 222, 245–247, and asparagine 325 contribute to the S-adenosyl-L-methionine site; these read GE and SLH. Cysteine 368 acts as the S-methylcysteine intermediate in catalysis.

It belongs to the radical SAM superfamily. RlmN family. It depends on [4Fe-4S] cluster as a cofactor.

Its subcellular location is the cytoplasm. It catalyses the reaction adenosine(2503) in 23S rRNA + 2 reduced [2Fe-2S]-[ferredoxin] + 2 S-adenosyl-L-methionine = 2-methyladenosine(2503) in 23S rRNA + 5'-deoxyadenosine + L-methionine + 2 oxidized [2Fe-2S]-[ferredoxin] + S-adenosyl-L-homocysteine. It carries out the reaction adenosine(37) in tRNA + 2 reduced [2Fe-2S]-[ferredoxin] + 2 S-adenosyl-L-methionine = 2-methyladenosine(37) in tRNA + 5'-deoxyadenosine + L-methionine + 2 oxidized [2Fe-2S]-[ferredoxin] + S-adenosyl-L-homocysteine. Specifically methylates position 2 of adenine 2503 in 23S rRNA and position 2 of adenine 37 in tRNAs. This is Probable dual-specificity RNA methyltransferase RlmN from Nocardioides sp. (strain ATCC BAA-499 / JS614).